The primary structure comprises 137 residues: Large-conductance mechanosensitive channel (137 aa).

The next 3 helical transmembrane spans lie at 15–35, 38–58, and 80–100; these read IDLA…NSIV, IFMP…MFIQ, and GNFI…FLFV.

Belongs to the MscL family. In terms of assembly, homopentamer.

Its subcellular location is the cell inner membrane. Functionally, channel that opens in response to stretch forces in the membrane lipid bilayer. May participate in the regulation of osmotic pressure changes within the cell. This is Large-conductance mechanosensitive channel from Bartonella henselae (strain ATCC 49882 / DSM 28221 / CCUG 30454 / Houston 1) (Rochalimaea henselae).